Reading from the N-terminus, the 908-residue chain is Protein translocase subunit SecA (908 aa).

Residues glutamine 87, glycine 105 to threonine 109, and aspartate 512 each bind ATP. The tract at residues alanine 860–serine 908 is disordered. Residues cysteine 892, cysteine 894, cysteine 903, and histidine 904 each coordinate Zn(2+). The span at arginine 898 to serine 908 shows a compositional bias: basic residues.

Belongs to the SecA family. Monomer and homodimer. Part of the essential Sec protein translocation apparatus which comprises SecA, SecYEG and auxiliary proteins SecDF-YajC and YidC. It depends on Zn(2+) as a cofactor.

Its subcellular location is the cell inner membrane. It is found in the cytoplasm. It catalyses the reaction ATP + H2O + cellular proteinSide 1 = ADP + phosphate + cellular proteinSide 2.. Its function is as follows. Part of the Sec protein translocase complex. Interacts with the SecYEG preprotein conducting channel. Has a central role in coupling the hydrolysis of ATP to the transfer of proteins into and across the cell membrane, serving both as a receptor for the preprotein-SecB complex and as an ATP-driven molecular motor driving the stepwise translocation of polypeptide chains across the membrane. This chain is Protein translocase subunit SecA, found in Shewanella baltica (strain OS155 / ATCC BAA-1091).